We begin with the raw amino-acid sequence, 508 residues long: Photosystem II CP47 reaction center protein (508 aa).

The next 6 membrane-spanning stretches (helical) occupy residues 21–36, 101–115, 140–156, 203–218, 237–252, and 457–472; these read AVHI…WAGS, IVFS…IWHW, GIHL…FGAF, IAAG…FHLS, VLSS…AFVV, and SFAL…HGAR.

It belongs to the PsbB/PsbC family. PsbB subfamily. As to quaternary structure, PSII is composed of 1 copy each of membrane proteins PsbA, PsbB, PsbC, PsbD, PsbE, PsbF, PsbH, PsbI, PsbJ, PsbK, PsbL, PsbM, PsbT, PsbX, PsbY, PsbZ, Psb30/Ycf12, at least 3 peripheral proteins of the oxygen-evolving complex and a large number of cofactors. It forms dimeric complexes. Binds multiple chlorophylls. PSII binds additional chlorophylls, carotenoids and specific lipids. is required as a cofactor.

It is found in the plastid. Its subcellular location is the chloroplast thylakoid membrane. Its function is as follows. One of the components of the core complex of photosystem II (PSII). It binds chlorophyll and helps catalyze the primary light-induced photochemical processes of PSII. PSII is a light-driven water:plastoquinone oxidoreductase, using light energy to abstract electrons from H(2)O, generating O(2) and a proton gradient subsequently used for ATP formation. This is Photosystem II CP47 reaction center protein from Ranunculus macranthus (Large buttercup).